The following is a 489-amino-acid chain: EGF-like domain-containing protein 2 (489 aa).

A signal peptide spans 1–23; the sequence is MMQTLLRGLCVVVLFWGYIKASA. Residues 73–109 form the EGF-like domain; it reads PATLCDPPCLNGGQCFEPTADTYMCMCSEAFYGSQCE. Cystine bridges form between Cys-77-Cys-87, Cys-81-Cys-97, and Cys-99-Cys-108. The region spanning 116–370 is the ZP domain; it reads ECSGDQITIN…GSCPTPAPPA (255 aa). Asn-229 carries an N-linked (GlcNAc...) asparagine glycan. Disordered regions lie at residues 358–389 and 404–425; these read CEPG…AASD and RSNE…QNAD. A compositionally biased stretch (pro residues) spans 363–374; sequence CPTPAPPAPVQP. The span at 404–420 shows a compositional bias: basic and acidic residues; the sequence is RSNEKLRLPHNKSDKKS. N-linked (GlcNAc...) asparagine glycans are attached at residues Asn-414 and Asn-479.

As to expression, component of the acid-insoluble organic matrix of calcified layers of the shell (at protein level).

It localises to the secreted. This Lottia gigantea (Giant owl limpet) protein is EGF-like domain-containing protein 2.